The chain runs to 131 residues: uncharacterized protein (131 aa).

A disordered region spans residues 13–32 (TYSPLPEPPPTPALGGQRGP).

This is an uncharacterized protein from Homo sapiens (Human).